The sequence spans 249 residues: T-cell immunoreceptor with Ig and ITIM domains (249 aa).

An N-terminal signal peptide occupies residues Met1–Gly28. An Ig-like V-type domain is found at Thr29–Leu127. At Thr29–Gly148 the chain is on the extracellular side. Residues Asn35–Ile45 form a homodimerization region. Residues Cys48 and Cys111 are joined by a disulfide bond. Residue Asn104 is glycosylated (N-linked (GlcNAc...) asparagine). A helical transmembrane segment spans residues Gly149 to Ala169. The Cytoplasmic portion of the chain corresponds to Arg170–Gly249. The interval Ser182–Asp222 is disordered. Positions Asn195–Ala211 are enriched in polar residues. Positions Leu234–Leu239 match the ITIM motif motif.

In terms of assembly, homodimer in cis; binds with high affinity to PVR, forming a heterotetrameric assembly of two TIGIT and two PVR molecules. Binds with lower affinity to NECTIN2 and NECTIN3. Interacts with GRB2. Interacts with NECTIN4.

Its subcellular location is the cell membrane. Its function is as follows. Inhibitory receptor that plays a role in the modulation of immune responses. Suppresses T-cell activation by promoting the generation of mature immunoregulatory dendritic cells. Upon binding to its ligands PVR/CD155 or NECTIN2/CD112, which are expressed on antigen-presenting cells, sends inhibitory signals to the T-cell or NK cell. Mechanistically, interaction with ligand leads to phosphorylation of the cytoplasmic tail by Src family tyrosine kinases such as FYN or LCK, allowing subsequent binding to adapter GRB2 and SHIP1/INPP5D. In turn, inhibits PI3K and MAPK signaling cascades. In addition, associates with beta-arrestin-2/ARRB2 to recruit SHIP1/INPP5D that suppresses autoubiquitination of TRAF6 and subsequently inhibits NF-kappa-B signaling pathway. Also acts as a receptor for NECTIN4 to inhibit NK cell cytotoxicity. The chain is T-cell immunoreceptor with Ig and ITIM domains from Mus musculus (Mouse).